The following is a 589-amino-acid chain: Putative phospholipase B-like 2 (589 aa).

The N-terminal stretch at 1-41 (MVAPMYGSPGGRLARAVTRALALALVLALLVGLFLSGLTGA) is a signal peptide. N-linked (GlcNAc...) asparagine glycans are attached at residues Asn88 and Asn110. Cys142 and Cys152 form a disulfide bridge. N-linked (GlcNAc...) asparagine glycans are attached at residues Asn174, Asn231, Asn436, and Asn465. Residues Cys492 and Cys495 are joined by a disulfide bond. Residue Asn515 is glycosylated (N-linked (GlcNAc...) asparagine).

Belongs to the phospholipase B-like family. Interacts with IGF2R. In terms of processing, glycosylated; contains mannose 6-phosphate sugars.

The protein resides in the lysosome lumen. In terms of biological role, putative phospholipase. This chain is Putative phospholipase B-like 2 (PLBD2), found in Bos taurus (Bovine).